An 81-amino-acid polypeptide reads, in one-letter code: Photosystem I iron-sulfur center (81 aa).

2 4Fe-4S ferredoxin-type domains span residues 2–31 (AHSVKIYDTCIGCTQCVRACPTDVLEMIPW) and 39–68 (IASAPRTEDCVGCKRCESACPTDFLSVRVY). [4Fe-4S] cluster contacts are provided by cysteine 11, cysteine 14, cysteine 17, cysteine 21, cysteine 48, cysteine 51, cysteine 54, and cysteine 58.

The eukaryotic PSI reaction center is composed of at least 11 subunits. [4Fe-4S] cluster serves as cofactor.

It is found in the plastid. The protein localises to the chloroplast thylakoid membrane. It carries out the reaction reduced [plastocyanin] + hnu + oxidized [2Fe-2S]-[ferredoxin] = oxidized [plastocyanin] + reduced [2Fe-2S]-[ferredoxin]. Functionally, apoprotein for the two 4Fe-4S centers FA and FB of photosystem I (PSI); essential for photochemical activity. FB is the terminal electron acceptor of PSI, donating electrons to ferredoxin. The C-terminus interacts with PsaA/B/D and helps assemble the protein into the PSI complex. Required for binding of PsaD and PsaE to PSI. PSI is a plastocyanin-ferredoxin oxidoreductase, converting photonic excitation into a charge separation, which transfers an electron from the donor P700 chlorophyll pair to the spectroscopically characterized acceptors A0, A1, FX, FA and FB in turn. The protein is Photosystem I iron-sulfur center of Staurastrum punctulatum (Green alga).